Reading from the N-terminus, the 111-residue chain is UPF0339 protein BP0521 (111 aa).

Repeat copies occupy residues 9–57 and 60–108. A disordered region spans residues 86–111; it reads TQARDNGIASVKSNAPGAPTKDQTQA.

It belongs to the UPF0339 family. Duplicated subfamily.

The chain is UPF0339 protein BP0521 from Bordetella pertussis (strain Tohama I / ATCC BAA-589 / NCTC 13251).